We begin with the raw amino-acid sequence, 316 residues long: Vacuolar morphogenesis protein 7 (316 aa).

In terms of domain architecture, PX spans 1 to 124; that stretch reads MAANSVGKMS…QDFLQLSKPN (124 aa). A coiled-coil region spans residues 168-186; that stretch reads RARTKLHKLRERLEQDVQK. In terms of domain architecture, t-SNARE coiled-coil homology spans 250-312; sequence MQMVRDQEQE…QIANKKARHF (63 aa).

In terms of assembly, possibly multimeric. Associates with VAM3.

The protein resides in the vacuole. Functionally, essential for proper morphogenesis of the vacuole. May exist as structural reinforcement on the surface of the vacuolar membrane and be required for maintenance against rupture by osmotic pressure. In Saccharomyces cerevisiae (strain ATCC 204508 / S288c) (Baker's yeast), this protein is Vacuolar morphogenesis protein 7 (VAM7).